Reading from the N-terminus, the 414-residue chain is Gamma-glutamyl phosphate reductase (414 aa).

The protein belongs to the gamma-glutamyl phosphate reductase family.

The protein resides in the cytoplasm. It catalyses the reaction L-glutamate 5-semialdehyde + phosphate + NADP(+) = L-glutamyl 5-phosphate + NADPH + H(+). It functions in the pathway amino-acid biosynthesis; L-proline biosynthesis; L-glutamate 5-semialdehyde from L-glutamate: step 2/2. Its function is as follows. Catalyzes the NADPH-dependent reduction of L-glutamate 5-phosphate into L-glutamate 5-semialdehyde and phosphate. The product spontaneously undergoes cyclization to form 1-pyrroline-5-carboxylate. In Xanthomonas campestris pv. campestris (strain B100), this protein is Gamma-glutamyl phosphate reductase.